Consider the following 476-residue polypeptide: Beta-xylosidase (476 aa).

Glu-188 acts as the Proton donor in catalysis. Glu-292 (nucleophile) is an active-site residue. An N-linked (GlcNAc...) asparagine glycan is attached at Asn-468.

Belongs to the glycosyl hydrolase 5 (cellulase A) family.

The protein localises to the secreted. It catalyses the reaction Hydrolysis of (1-&gt;4)-beta-D-xylans, to remove successive D-xylose residues from the non-reducing termini.. In terms of biological role, catalyzes the hydrolysis of xylo-oligomers to xylose units and plays an important role in xylan degradation. Can also perform the transglycosylation of xylose and alcohol. Has no endoglucanase activity. This Phanerodontia chrysosporium (White-rot fungus) protein is Beta-xylosidase.